A 339-amino-acid polypeptide reads, in one-letter code: Annexin A2 (339 aa).

Residue serine 2 is modified to N-acetylserine. Residues 2-24 (STVHEILCKLSLEGDHSTPPSAY) form an S100A10-binding site region. A Phosphotyrosine; by SRC modification is found at tyrosine 24. Serine 26 carries the post-translational modification Phosphoserine; by PKC. Annexin repeat units lie at residues 33–104 (FDAE…GLLK) and 105–176 (TPAQ…ALAK). N6-acetyllysine; alternate is present on lysine 49. Lysine 49 participates in a covalent cross-link: Glycyl lysine isopeptide (Lys-Gly) (interchain with G-Cter in SUMO1); alternate. A Glycyl lysine isopeptide (Lys-Gly) (interchain with G-Cter in SUMO2); alternate cross-link involves residue lysine 49. Position 152 is an N6-acetyllysine (lysine 152). Phosphoserine is present on serine 184. Annexin repeat units follow at residues 189-261 (ELID…NLVQ) and 265-336 (NKPL…YLCG). Position 199 is a phosphotyrosine (tyrosine 199). At lysine 227 the chain carries N6-acetyllysine.

This sequence belongs to the annexin family. Heterotetramer containing 2 light chains of S100A10/p11 and 2 heavy chains of ANXA2/p36. Interacts with ATP1B1. Interacts with DYSF. Interacts with COCH. Interacts (via repeat Annexin 1) with PCSK9 (via the C-terminal domain); the interaction inhibits the degradation of LDLR. Interacts with CEACAM1 (via the cytoplasmic domain); this interaction is regulated by phosphorylation of CEACAM1. Interacts with APPL2 and APPL1; targets APPL2 to endosomes and acting in parallel to RAB5A. Interacts with S100A4. May interact with UBAP2. Interacts with PLEKHG4B; this interaction is required for PLEKHG4B localization to cell-cell adhesions. In terms of processing, ISGylated.

It localises to the secreted. It is found in the extracellular space. The protein localises to the extracellular matrix. Its subcellular location is the basement membrane. The protein resides in the melanosome. Its function is as follows. Calcium-regulated membrane-binding protein whose affinity for calcium is greatly enhanced by anionic phospholipids. It binds two calcium ions with high affinity. May be involved in heat-stress response. Inhibits PCSK9-enhanced LDLR degradation, probably reduces PCSK9 protein levels via a translational mechanism but also competes with LDLR for binding with PCSK9. Binds to endosomes damaged by phagocytosis of particulate wear debris and participates in endosomal membrane stabilization, thereby limiting NLRP3 inflammasome activation. Required for endothelial cell surface plasmin generation and may support fibrinolytic surveillance and neoangiogenesis. This chain is Annexin A2 (ANXA2), found in Bos taurus (Bovine).